Reading from the N-terminus, the 177-residue chain is N-acetylmuramoyl-L-alanine amidase A (177 aa).

An N-acetylmuramoyl-L-alanine amidase domain is found at 23–158 (QTSAVIMHTM…SGNENRYDPG (136 aa)). A disulfide bridge connects residues Cys-114 and Cys-121.

Its subcellular location is the secreted. The catalysed reaction is Hydrolyzes the link between N-acetylmuramoyl residues and L-amino acid residues in certain cell-wall glycopeptides.. Antibacterial activity against Gram-positive bacteria M.luteus, S.aureus, E.faecalis and P.acidilactici and Gram-negative bacterium E.coli. This chain is N-acetylmuramoyl-L-alanine amidase A (cwhA), found in Achromobacter lyticus.